Reading from the N-terminus, the 199-residue chain is GTP cyclohydrolase 1 (199 aa).

Zn(2+) is bound by residues Cys89, His92, and Cys161.

This sequence belongs to the GTP cyclohydrolase I family. As to quaternary structure, toroid-shaped homodecamer, composed of two pentamers of five dimers.

It carries out the reaction GTP + H2O = 7,8-dihydroneopterin 3'-triphosphate + formate + H(+). The protein operates within cofactor biosynthesis; 7,8-dihydroneopterin triphosphate biosynthesis; 7,8-dihydroneopterin triphosphate from GTP: step 1/1. This chain is GTP cyclohydrolase 1, found in Bifidobacterium longum (strain NCC 2705).